A 151-amino-acid chain; its full sequence is Ubiquitin-conjugating enzyme E2 2 (151 aa).

Residues 4–150 (AARRRLMRDF…VRETVEKSWE (147 aa)) enclose the UBC core domain. Residue cysteine 88 is the Glycyl thioester intermediate of the active site.

Belongs to the ubiquitin-conjugating enzyme family.

The protein resides in the cytoplasm. It localises to the nucleus. It carries out the reaction S-ubiquitinyl-[E1 ubiquitin-activating enzyme]-L-cysteine + [E2 ubiquitin-conjugating enzyme]-L-cysteine = [E1 ubiquitin-activating enzyme]-L-cysteine + S-ubiquitinyl-[E2 ubiquitin-conjugating enzyme]-L-cysteine.. It participates in protein modification; protein ubiquitination. Its function is as follows. Catalyzes the covalent attachment of ubiquitin to other proteins. Plays a role in transcription regulation by catalyzing the monoubiquitination of histone H2B to form H2BK123ub1. H2BK123ub1 gives a specific tag for epigenetic transcriptional activation and is also a prerequisite for H3K4me and H3K79me formation. Also involved in postreplication repair of UV-damaged DNA, in N-end rule-dependent protein degradation and in sporulation. The polypeptide is Ubiquitin-conjugating enzyme E2 2 (UBC2) (Fusarium solani (Filamentous fungus)).